The sequence spans 428 residues: MGLNTAIATRVNGTPPPEVPIAGIELGSLDFWALDDDVRDGAFATLRREAPISFWPTIELPGFVAGNGHWALTKNDDVFYASRHPDIFSSYPNITINDQTPELAEYFGSMIVLDDPRHQRLRSIVSRAFTPKVVARIEAAVRDRAHRLVSSMIANNPDRQADLVSELAGPLPLQIICDMMGIPKADHQRIFHWTNVILGFGDPDLATDFDEFMQVSADIGAYATALAEDRRVNHHDDLTSSLVEAEVDGERLSSREIASFFILLVVAGNETTRNAITHGVLALSRYPEQRDRWWSDFDGLAPTAVEEIVRWASPVVYMRRTLTQDIELRGTKMAAGDKVSLWYCSANRDESKFADPWTFDLARNPNPHLGFGGGGAHFCLGANLARREIRVAFDELRRQMPDVVATEEPARLLSQFIHGIKTLPVTWS.

Cysteine 379 lines the heme pocket.

Belongs to the cytochrome P450 family. Heme is required as a cofactor.

It catalyses the reaction a methyl-branched lipid + O2 + 2 reduced ferredoxin [iron-sulfur] cluster + 2 H(+) = an omega-hydroxy-methyl-branched lipid + H2O + 2 oxidized ferredoxin [iron-sulfur] cluster.. It carries out the reaction cholest-4-en-3-one + 6 reduced [2Fe-2S]-[ferredoxin] + 3 O2 + 5 H(+) = (25R)-3-oxocholest-4-en-26-oate + 6 oxidized [2Fe-2S]-[ferredoxin] + 4 H2O. The protein operates within lipid metabolism; branched-chain fatty acid metabolism. In terms of biological role, primarily hydroxylates the omega-carbon of a number of methyl-branched lipids, including (2E,6E)-farnesol, phytanate, geranylgeraniol, 15-methylpalmitate and (2E,6E)-farnesyl diphosphate. Also catalyzes the sequential oxidation of the terminal methyl of cholest-4-en-3-one into (25R)-26-hydroxycholest-4-en-3-one (alcohol), (25R)-26-oxocholest-4-en-3-one (aldehyde), to finally yield the carboxylic acid (25R)-3-oxocholest-4-en-26-oate. Also able to sequentially oxidize cholesterol itself, not only cholest-4-en-3-one. The chain is Methyl-branched lipid omega-hydroxylase (cyp124) from Mycobacterium tuberculosis (strain CDC 1551 / Oshkosh).